Consider the following 358-residue polypeptide: MRRVSGILAVAAFTISAFAGVIQPVAKDARDSAELDVKLTQVDGTVIKAVVTNNGDKDLNILNLNFFRDTAPVKKVSIYSQGVEVPFGGIRVRHKTSDLSSDVITYLAPGESFEDEFDVAITSDLSQGGPVVLQTQGYVPTTDTGGKTLSGVVRYKSNKLEIDVDGTTAAKSFAAMNQFVKIAKLSSCEGSQGDDTRRALRDCASLSTLAAAQAWAGGPKMLEYFKANDDATRKLVADRFTAVALESSNLTGGSTTYYCRDPYNICTNNIIAYTIPAENLISNCPIYYTEFDNVNRKCHGQDRVTTSLHEFTHASSVFSPGTKDIAYGYNACILLSTRDALNNADTFALFAQSINAGC.

Residues 1 to 19 (MRRVSGILAVAAFTISAFA) form the signal peptide. Positions 20-185 (GVIQPVAKDA…MNQFVKIAKL (166 aa)) are excised as a propeptide. Disulfide bonds link Cys188–Cys259 and Cys266–Cys284. The N-linked (GlcNAc...) asparagine glycan is linked to Asn249. His309 provides a ligand contact to Zn(2+). Glu310 is an active-site residue. The Zn(2+) site is built by His313 and Asp324.

This sequence belongs to the peptidase M35 family. Zn(2+) is required as a cofactor.

It localises to the secreted. The enzyme catalyses Preferential cleavage of bonds with hydrophobic residues in P1'. Also 3-Asn-|-Gln-4 and 8-Gly-|-Ser-9 bonds in insulin B chain.. In terms of biological role, secreted metalloproteinase that allows assimilation of proteinaceous substrates. Shows high activities on basic nuclear substrates such as histone and protamine. This is Neutral protease 2 homolog PADG_00776 from Paracoccidioides brasiliensis (strain Pb18).